A 45-amino-acid polypeptide reads, in one-letter code: Photosystem II reaction center protein K (45 aa).

The propeptide occupies 1–8; it reads MEGILFLA. Residues 24–44 form a helical membrane-spanning segment; that stretch reads APVIPVFFLLLAFVWQAAVGF.

Belongs to the PsbK family. As to quaternary structure, PSII is composed of 1 copy each of membrane proteins PsbA, PsbB, PsbC, PsbD, PsbE, PsbF, PsbH, PsbI, PsbJ, PsbK, PsbL, PsbM, PsbT, PsbX, PsbY, PsbZ, Psb30/Ycf12, at least 3 peripheral proteins of the oxygen-evolving complex and a large number of cofactors. It forms dimeric complexes.

It is found in the plastid. The protein localises to the chloroplast thylakoid membrane. Its function is as follows. One of the components of the core complex of photosystem II (PSII). PSII is a light-driven water:plastoquinone oxidoreductase that uses light energy to abstract electrons from H(2)O, generating O(2) and a proton gradient subsequently used for ATP formation. It consists of a core antenna complex that captures photons, and an electron transfer chain that converts photonic excitation into a charge separation. The chain is Photosystem II reaction center protein K from Guillardia theta (Cryptophyte).